The chain runs to 512 residues: Probable cytosol aminopeptidase (512 aa).

Residues lysine 284 and aspartate 289 each coordinate Mn(2+). Lysine 296 is a catalytic residue. Residues aspartate 307, aspartate 366, and glutamate 368 each contribute to the Mn(2+) site. Arginine 370 is a catalytic residue.

This sequence belongs to the peptidase M17 family. It depends on Mn(2+) as a cofactor.

It localises to the cytoplasm. The catalysed reaction is Release of an N-terminal amino acid, Xaa-|-Yaa-, in which Xaa is preferably Leu, but may be other amino acids including Pro although not Arg or Lys, and Yaa may be Pro. Amino acid amides and methyl esters are also readily hydrolyzed, but rates on arylamides are exceedingly low.. The enzyme catalyses Release of an N-terminal amino acid, preferentially leucine, but not glutamic or aspartic acids.. Its function is as follows. Presumably involved in the processing and regular turnover of intracellular proteins. Catalyzes the removal of unsubstituted N-terminal amino acids from various peptides. The chain is Probable cytosol aminopeptidase from Cupriavidus necator (strain ATCC 17699 / DSM 428 / KCTC 22496 / NCIMB 10442 / H16 / Stanier 337) (Ralstonia eutropha).